Reading from the N-terminus, the 336-residue chain is Phosphate acyltransferase (336 aa).

It belongs to the PlsX family. Homodimer. Probably interacts with PlsY.

Its subcellular location is the cytoplasm. The catalysed reaction is a fatty acyl-[ACP] + phosphate = an acyl phosphate + holo-[ACP]. Its pathway is lipid metabolism; phospholipid metabolism. In terms of biological role, catalyzes the reversible formation of acyl-phosphate (acyl-PO(4)) from acyl-[acyl-carrier-protein] (acyl-ACP). This enzyme utilizes acyl-ACP as fatty acyl donor, but not acyl-CoA. This is Phosphate acyltransferase from Pseudomonas aeruginosa (strain UCBPP-PA14).